The following is a 378-amino-acid chain: Probable 3-hydroxyisobutyryl-CoA hydrolase 3 (378 aa).

Substrate-binding residues include E138 and D146.

This sequence belongs to the enoyl-CoA hydratase/isomerase family.

The protein resides in the peroxisome. It carries out the reaction 3-hydroxy-2-methylpropanoyl-CoA + H2O = 3-hydroxy-2-methylpropanoate + CoA + H(+). It participates in amino-acid degradation; L-valine degradation. Involved in valine catabolism. The polypeptide is Probable 3-hydroxyisobutyryl-CoA hydrolase 3 (Arabidopsis thaliana (Mouse-ear cress)).